Consider the following 334-residue polypeptide: Oligopeptide transport ATP-binding protein OppF (334 aa).

In terms of domain architecture, ABC transporter spans 12–265; sequence LEIADLKVHF…PLHPYTKALM (254 aa). An ATP-binding site is contributed by 57 to 64; sequence GESGCGKS.

Belongs to the ABC transporter superfamily. In terms of assembly, the complex is composed of two ATP-binding proteins (OppD and OppF), two transmembrane proteins (OppB and OppC) and a solute-binding protein (OppA).

Its subcellular location is the cell inner membrane. The catalysed reaction is a [peptide](out) + ATP + H2O = a [peptide](in) + ADP + phosphate + H(+). It carries out the reaction L-alanyl-gamma-D-glutamyl-meso-2,6-diaminopimelate(out) + ATP + H2O = L-alanyl-gamma-D-glutamyl-meso-2,6-diaminopimelate(in) + ADP + phosphate + H(+). Functionally, part of the ABC transporter complex OppABCDF involved in the uptake of oligopeptides, including the cell wall murein tripeptide L-alanyl-gamma-D-glutamyl-meso-diaminopimelate. Probably responsible for energy coupling to the transport system. Plays an important nutritional role and is involved in the recycling of cell wall peptides. This chain is Oligopeptide transport ATP-binding protein OppF, found in Salmonella typhimurium (strain LT2 / SGSC1412 / ATCC 700720).